Here is a 155-residue protein sequence, read N- to C-terminus: MDCSFITTNDLRRMFKTLDKNQDGLVTLDELLWILDKLGWAEHTPDELELIVGKQSLDLDEFLRFYYDAVLDSKGSKKNIDVVADNDEAIARAFNVFDVNGDGYISAEELRDVLERLGFEEEAKAWDCGRMIRVHDKNLDGFVDFEEFKNMILHV.

EF-hand domains lie at 6–41 (ITTN…LGWA), 85–120 (DNDE…LGFE), and 130–155 (RMIR…ILHV). Positions 19, 21, 23, 30, 98, 100, 102, 104, and 109 each coordinate Ca(2+).

Its function is as follows. Potential calcium sensor. In Arabidopsis thaliana (Mouse-ear cress), this protein is Probable calcium-binding protein CML44 (CML44).